Reading from the N-terminus, the 57-residue chain is MLFKSLQSISSVSSVQKNQISSISVGSTQSNNNAALLDAAALVVIPGLLTAAAVAHI.

Residues 34–54 traverse the membrane as a helical segment; the sequence is AALLDAAALVVIPGLLTAAAV.

It is found in the membrane. This is an uncharacterized protein from Dictyostelium discoideum (Social amoeba).